The chain runs to 624 residues: Phosphatidylserine decarboxylase proenzyme 2 (624 aa).

A disordered region spans residues 1–30 (MGHSPSRHNACGGGGGDGESPPSPLPSRFE). Positions 16-129 (GDGESPPSPL…KDLDEHSEVL (114 aa)) constitute a C2 domain. EF-hand domains lie at 156 to 191 (TEQSFARRVLAIVDYNEDGELSLSEFSDLMKAFGNK) and 192 to 227 (LAVAKIEELFRQADKNGDGIVDMDELAALLANQQEK). 9 residues coordinate Ca(2+): Asp-169, Asn-171, Asp-173, Glu-175, Glu-180, Asp-205, Asn-207, Asp-209, and Glu-216. Catalysis depends on charge relay system; for autoendoproteolytic cleavage activity residues Asp-425, His-481, and Ser-569. The active-site Schiff-base intermediate with substrate; via pyruvic acid; for decarboxylase activity is the Ser-569. The residue at position 569 (Ser-569) is a Pyruvic acid (Ser); by autocatalysis.

Belongs to the phosphatidylserine decarboxylase family. PSD-B subfamily. Eukaryotic type II sub-subfamily. In terms of assembly, heterodimer of a large membrane-associated beta subunit and a small pyruvoyl-containing alpha subunit. The cofactor is pyruvate. Post-translationally, is synthesized initially as an inactive proenzyme. Formation of the active enzyme involves a self-maturation process in which the active site pyruvoyl group is generated from an internal serine residue via an autocatalytic post-translational modification. Two non-identical subunits are generated from the proenzyme in this reaction, and the pyruvate is formed at the N-terminus of the alpha chain, which is derived from the carboxyl end of the proenzyme. The autoendoproteolytic cleavage occurs by a canonical serine protease mechanism, in which the side chain hydroxyl group of the serine supplies its oxygen atom to form the C-terminus of the beta chain, while the remainder of the serine residue undergoes an oxidative deamination to produce ammonia and the pyruvoyl prosthetic group on the alpha chain. During this reaction, the Ser that is part of the protease active site of the proenzyme becomes the pyruvoyl prosthetic group, which constitutes an essential element of the active site of the mature decarboxylase.

The protein localises to the vacuole membrane. It localises to the endoplasmic reticulum membrane. It catalyses the reaction a 1,2-diacyl-sn-glycero-3-phospho-L-serine + H(+) = a 1,2-diacyl-sn-glycero-3-phosphoethanolamine + CO2. Its pathway is phospholipid metabolism; phosphatidylethanolamine biosynthesis; phosphatidylethanolamine from CDP-diacylglycerol: step 2/2. In terms of biological role, catalyzes the formation of phosphatidylethanolamine (PtdEtn) from phosphatidylserine (PtdSer). Plays a central role in phospholipid metabolism and in the interorganelle trafficking of phosphatidylserine. This is Phosphatidylserine decarboxylase proenzyme 2 from Oryza sativa subsp. japonica (Rice).